The primary structure comprises 665 residues: Coiled-coil domain-containing protein 138 (665 aa).

The residue at position 48 (T48) is a Phosphothreonine. S49 carries the phosphoserine modification. A coiled-coil region spans residues 198–323; sequence QQKFAEELQK…YEFMTIQRLK (126 aa). S469 carries the phosphoserine modification.

The polypeptide is Coiled-coil domain-containing protein 138 (CCDC138) (Homo sapiens (Human)).